Reading from the N-terminus, the 265-residue chain is Exosome complex component Rrp4 (265 aa).

An S1 motif domain is found at G65 to K137. The region spanning K147–A205 is the KH domain. The segment covering E241–E254 has biased composition (acidic residues). The disordered stretch occupies residues E241–T265.

It belongs to the RRP4 family. Component of the archaeal exosome complex. Forms a trimer of Rrp4 and/or Csl4 subunits. The trimer associates with a hexameric ring-like arrangement composed of 3 Rrp41-Rrp42 heterodimers.

Its subcellular location is the cytoplasm. In terms of biological role, non-catalytic component of the exosome, which is a complex involved in RNA degradation. Increases the RNA binding and the efficiency of RNA degradation. Confers strong poly(A) specificity to the exosome. This chain is Exosome complex component Rrp4, found in Pyrococcus horikoshii (strain ATCC 700860 / DSM 12428 / JCM 9974 / NBRC 100139 / OT-3).